Reading from the N-terminus, the 349-residue chain is tRNA pseudouridine synthase D (349 aa).

Residue Phe27 participates in substrate binding. The active-site Nucleophile is the Asp80. Asn129 contributes to the substrate binding site. The region spanning 155–303 (GVPNYFGAQR…VEAARRAMLL (149 aa)) is the TRUD domain. Phe329 is a binding site for substrate.

It belongs to the pseudouridine synthase TruD family.

It carries out the reaction uridine(13) in tRNA = pseudouridine(13) in tRNA. Its function is as follows. Responsible for synthesis of pseudouridine from uracil-13 in transfer RNAs. This is tRNA pseudouridine synthase D from Escherichia coli (strain SE11).